The chain runs to 97 residues: Co-chaperonin GroES (97 aa).

This sequence belongs to the GroES chaperonin family. As to quaternary structure, heptamer of 7 subunits arranged in a ring. Interacts with the chaperonin GroEL.

It localises to the cytoplasm. Together with the chaperonin GroEL, plays an essential role in assisting protein folding. The GroEL-GroES system forms a nano-cage that allows encapsulation of the non-native substrate proteins and provides a physical environment optimized to promote and accelerate protein folding. GroES binds to the apical surface of the GroEL ring, thereby capping the opening of the GroEL channel. The sequence is that of Co-chaperonin GroES from Azotobacter vinelandii (strain DJ / ATCC BAA-1303).